We begin with the raw amino-acid sequence, 290 residues long: Alpha-1,2-colitosyltransferase (290 aa).

The protein belongs to the glycosyltransferase 11 family. Does not require a metal cofactor. serves as cofactor.

It carries out the reaction GDP-beta-L-colitose + beta-D-galactosyl-(1-&gt;3)-N-acetyl-D-glucosamine = alpha-L-colitosyl-(1-&gt;2)-beta-D-galactosyl-(1-&gt;3)-N-acetyl-D-glucosamine + GDP + H(+). Its pathway is bacterial outer membrane biogenesis; LPS O-antigen biosynthesis. Its activity is regulated as follows. Addition of metal ions dramatically decreases the activity to 0-40%. Its function is as follows. Involved in the biosynthesis of the lipopolysaccharide (LPS) O-antigen region. Catalyzes the transfer of colitose from GDP-colitose to the galactose residue of beta-Gal-(1-&gt;3)-GlcNAc (lacto-N-biose) via an alpha1,2-linkage. Is specific for beta-Gal-(1-&gt;3)-GlcNAc, but can use GDP-L-fucose as the sugar donor with almost the same efficiency as GDP-L-colitose. This chain is Alpha-1,2-colitosyltransferase, found in Escherichia coli.